Reading from the N-terminus, the 342-residue chain is MTQKITLHDMTLRDGMHPKRHLMTLEQMKSVAQGLDAAGVPLIEVTHGDGLGGASVNYGFPAHSDEEYLGTVIPLMKQAKVSALLLPGIGTVDHLKMAHGLGVHTIRVATHCTEADVSEQHITMARKLDMDTVGFLMMAHMNDAAGLVKQARLMEGYGANCIYVTDSAGYLLPDQVTERIAAVRAALKPETELGFHCHHNLAMGVANSIAAIQAGANRIDAAAAGLGAGAGNTPLEVLVAVLDRMGIDTGVDVWKIQDVAEDLVVPLMDFPIRIDRDALTLGYAGVYGSFLLFAKRAEKKYGIPARDLLVELGRRGMVGGQEDMIEDTALTMARARGLTVNA.

The region spanning 5–257 (ITLHDMTLRD…DTGVDVWKIQ (253 aa)) is the Pyruvate carboxyltransferase domain. 13–14 (RD) serves as a coordination point for substrate. Asp-14 is a Mn(2+) binding site. His-17 (proton acceptor) is an active-site residue. Substrate-binding residues include Ser-167 and His-196. Mn(2+)-binding residues include His-196 and His-198. Position 287 (Tyr-287) interacts with substrate.

This sequence belongs to the 4-hydroxy-2-oxovalerate aldolase family.

The catalysed reaction is (S)-4-hydroxy-2-oxopentanoate = acetaldehyde + pyruvate. This is 4-hydroxy-2-oxovalerate aldolase from Acidovorax sp. (strain JS42).